We begin with the raw amino-acid sequence, 179 residues long: Large ribosomal subunit protein uL6 (179 aa).

The protein belongs to the universal ribosomal protein uL6 family. As to quaternary structure, part of the 50S ribosomal subunit.

Functionally, this protein binds to the 23S rRNA, and is important in its secondary structure. It is located near the subunit interface in the base of the L7/L12 stalk, and near the tRNA binding site of the peptidyltransferase center. The chain is Large ribosomal subunit protein uL6 from Mycobacterium ulcerans (strain Agy99).